The following is a 924-amino-acid chain: MASNNTSQRSGFSSFFCRLKTYFCNHFLCLFVLSFFPLSFRRLCLLCHLCEKSNLWLSSDNSASVVKQEREVLPTNVKPLHYDLTIEPIFDNFTFKGEETIDFQVNEKTNFITLNSLEIEVQEAKIDGKSVTDISFDAGKQTVTFKFDDDLSTGSIAKLYIKFTGELNDKMAGFYRASYQEDGKTKYMATTQMEPTDCRRAFPSYDEPAAKSKFTISLIADKELVCLSNSSEKETVSLDGNKKKVTFQTTPLMSTYLVAFIVGDLRYISNDNYRVPIRVYSTPGTEHLGEYSANIAAQTLKFFDQQFGIDYPYDKLDMVAVPSFSAGAMENCGLVTFRTVDLLIDADNANVNTKQRVTEVVMHELAHQWFGDLVTMEFWDGLWLNEGFATWMSWYACNSLYPDWKVWESYVSDSLQHALTLDALRASHPIEVPVKRADEINQIFDAISYSKGSSLLRMISKWLGEDVFVKGVSNYLKKHKWGNTKTSDLWEALSEASGEDVVKVMDIWTKNIGFPIVKVEEIGNGEIKVTQNRFLATGDVKESEDKTLYPVFLGLKTSEGVDESSVLETRSKTIKLPTSDDFFKINGDQSGIYRTAYEPARWTKLGKAGVEGKLSVEDRVGLVADAGSLASSGFIKTSSLLDLVKSWSKESNYVVWNEILTRIGSIKAALMFEDEATKKALEIFTRDLISEKLKETGWEFSADDSFADQQLKSSLFASAANAEDPEAVAFAKEAFAKFIAGDKKAIHPNLRASIFNTNAKYGDEKTFDELYNIYRNPSSVEEKIAALRSFGRFTKPEILDKVTGLLLQTDIVKQQDIYIPMQGLRAHKLGVEKLWTWLSENWDQIYILLPPGLSMLGSVVTLGTSGFTKEEQKKKVEEFFAQKDNKGYDQSLAQSLDIITAKSKWTDRDAKSIYEWLEANEYTK.

The first 45 residues, 1–45 (MASNNTSQRSGFSSFFCRLKTYFCNHFLCLFVLSFFPLSFRRLCL), serve as a signal peptide directing secretion. Residues 46-57 (LCHLCEKSNLWL) constitute a propeptide that is removed on maturation. An N-acetylserine; partial modification is found at Ser-58. Asn-92 carries N-linked (GlcNAc...) asparagine glycosylation. Glu-194 provides a ligand contact to substrate. N-linked (GlcNAc...) asparagine glycosylation occurs at Asn-229. 327–331 (GAMEN) serves as a coordination point for substrate. Zn(2+) is bound at residue His-363. Glu-364 (proton acceptor) is an active-site residue. His-367 and Glu-386 together coordinate Zn(2+).

The protein belongs to the peptidase M1 family. Requires Zn(2+) as cofactor.

The protein localises to the secreted. The protein resides in the cell wall. With respect to regulation, inactivated by metal-chelating agents phenanthroline and EDTA. Inhibited by bestatin, an aminopeptidase inhibitor. Not inhibited by pepstatin A and PMSF, inhibitors of aspartic and the serine proteases, respectively. Not inhibited by carboxypeptidase inhibitor. Metalloprotease that specifically hydrolyzes peptides with N-terminal alanine, arginine and leucine residues. This is Aminopeptidase 2 (APE2) from Candida albicans (strain SC5314 / ATCC MYA-2876) (Yeast).